Consider the following 449-residue polypeptide: Guanine nucleotide-binding protein alpha-2 subunit (449 aa).

Positions 1 to 91 (MGLCASSEKN…TATANTSGSQ (91 aa)) are disordered. A lipid anchor (N-myristoyl glycine) is attached at Gly2. A lipid anchor (S-palmitoyl cysteine) is attached at Cys4. Composition is skewed to polar residues over residues 7–23 (SEKNGSTPDTQTASAGS) and 38–48 (QKTVRTVNTAN). A compositionally biased stretch (low complexity) spans 49-59 (QQEKQQQRQQQ). The segment covering 72–91 (NGSINNAISPTATANTSGSQ) has biased composition (polar residues). The region spanning 122–448 (KELKVLLLGA…ENTLKDSGVL (327 aa)) is the G-alpha domain. Residues 125–138 (KVLLLGAGESGKST) form a G1 motif region. GTP contacts are provided by Glu133, Ser134, Gly135, Lys136, Ser137, Thr138, Asp245, Leu270, Thr276, Gly299, Asn365, Lys366, Asp368, and Ala420. Residue Ser137 coordinates Mg(2+). A G2 motif region spans residues 268 to 276 (DILRSRQMT). Mg(2+) is bound at residue Thr276. Positions 292–301 (MHIYDVGGQR) are G3 motif. The segment at 361-368 (VLFLNKID) is G4 motif. The G5 motif stretch occupies residues 418–423 (TQATDT).

It belongs to the G-alpha family. G(q) subfamily. G proteins are composed of 3 units; alpha, beta and gamma. The alpha chain contains the guanine nucleotide binding site. GPA2 interacts with the kelch repeat beta-mimic proteins GPB1 and GPB2 and with the gamma subunit GPG1. Interacts with the G protein coupled receptor GPR1. Also interacts with regulators of G protein signaling (RGS) protein RGS2. Mg(2+) is required as a cofactor. In terms of processing, myristoylation at Gly-2 and palmitoylation at Cys-4 are required for membrane localization and function of the protein.

The protein localises to the cell membrane. Alternates between an inactive form bound to GDP and an active form bound to GTP. Activated by the G protein coupled receptor (GPCR) GPR1, which serves as a guanine nucleotide-exchange factor (GEF), and inactivated by RGS2, acting as a GTPase-activating protein (GAP) for GPA2. Functionally, alpha subunit of the heterotrimeric guanine nucleotide-binding protein (G protein) involved in glucose-induced cAMP signaling. Binds to its cognate transmembrane receptor GPR1, which senses extracellular carbon sources, and activates cAMP-PKA signaling and governs diploid pseudohyphal differentiation and haploid invasive growth. The G protein beta-mimic proteins GPB1 and GPB2 inhibit GPA2-GPR1 coupling, probably to reduce signaling in the absence of glucose. This Saccharomyces cerevisiae (strain ATCC 204508 / S288c) (Baker's yeast) protein is Guanine nucleotide-binding protein alpha-2 subunit (GPA2).